A 568-amino-acid chain; its full sequence is Peroxisomal leader peptide-processing protease (568 aa).

The segment at 332–568 is serine protease; the sequence is TPRGLPLRDL…PLSEVPRSKL (237 aa). Residues H374, D410, and S483 each act as charge relay system in the active site.

It belongs to the peptidase S1B family. In terms of assembly, homodimer. Forms a heterodimer with the C-terminal cleavage product (49 kDa form). Forms a heterodimer with the N-terminal cleavage product (10 kDa form). Interacts with PEX5. Interacts with LONP2. Post-translationally, self-cleavage gives rise to an N-terminal 10-kDa fragment and C-terminal 49-kDa fragment upon import into the peroxisomes. The full-lengh TYSND1 is the active the proteolytic processing of PTS1- and PTS2-proteins and in self-cleavage, and intermolecular self-cleavage of TYSND1 down-regulates its protease activity.

It localises to the peroxisome. Its activity is regulated as follows. Inhibited by N-ethylmaleimide (NEM). Not affected by leupeptin or trans-epoxysuccinyl-l-leucylamido-(4-gianidino) butane (E64). Peroxisomal protease that mediates both the removal of the leader peptide from proteins containing a PTS2 target sequence and processes several PTS1-containing proteins. Catalyzes the processing of PTS1-proteins involved in the peroxisomal beta-oxidation of fatty acids. The chain is Peroxisomal leader peptide-processing protease (Tysnd1) from Mus musculus (Mouse).